Reading from the N-terminus, the 282-residue chain is Pantothenate synthetase (282 aa).

An ATP-binding site is contributed by 30–37 (MGYLHEGH). The Proton donor role is filled by His37. Gln61 lines the (R)-pantoate pocket. Beta-alanine is bound at residue Gln61. 147-150 (GMKD) provides a ligand contact to ATP. (R)-pantoate is bound at residue Gln153. ATP-binding positions include Val176 and 184-187 (KSSR).

This sequence belongs to the pantothenate synthetase family. In terms of assembly, homodimer.

Its subcellular location is the cytoplasm. It carries out the reaction (R)-pantoate + beta-alanine + ATP = (R)-pantothenate + AMP + diphosphate + H(+). The protein operates within cofactor biosynthesis; (R)-pantothenate biosynthesis; (R)-pantothenate from (R)-pantoate and beta-alanine: step 1/1. Functionally, catalyzes the condensation of pantoate with beta-alanine in an ATP-dependent reaction via a pantoyl-adenylate intermediate. The protein is Pantothenate synthetase of Bacillus cereus (strain ATCC 14579 / DSM 31 / CCUG 7414 / JCM 2152 / NBRC 15305 / NCIMB 9373 / NCTC 2599 / NRRL B-3711).